The primary structure comprises 124 residues: Small ribosomal subunit protein uS12 (124 aa).

The tract at residues 1–24 (MTTINQLVRKPRQATTYKSASPAL) is disordered. Residue aspartate 89 is modified to 3-methylthioaspartic acid.

Belongs to the universal ribosomal protein uS12 family. As to quaternary structure, part of the 30S ribosomal subunit. Contacts proteins S8 and S17. May interact with IF1 in the 30S initiation complex.

In terms of biological role, with S4 and S5 plays an important role in translational accuracy. Its function is as follows. Interacts with and stabilizes bases of the 16S rRNA that are involved in tRNA selection in the A site and with the mRNA backbone. Located at the interface of the 30S and 50S subunits, it traverses the body of the 30S subunit contacting proteins on the other side and probably holding the rRNA structure together. The combined cluster of proteins S8, S12 and S17 appears to hold together the shoulder and platform of the 30S subunit. This chain is Small ribosomal subunit protein uS12, found in Xanthomonas axonopodis pv. citri (strain 306).